Here is a 119-residue protein sequence, read N- to C-terminus: Large ribosomal subunit protein bL20 (119 aa).

The protein belongs to the bacterial ribosomal protein bL20 family.

In terms of biological role, binds directly to 23S ribosomal RNA and is necessary for the in vitro assembly process of the 50S ribosomal subunit. It is not involved in the protein synthesizing functions of that subunit. The polypeptide is Large ribosomal subunit protein bL20 (Latilactobacillus sakei subsp. sakei (strain 23K) (Lactobacillus sakei subsp. sakei)).